The sequence spans 173 residues: Inorganic pyrophosphatase (173 aa).

Substrate is bound by residues lysine 28, arginine 42, and tyrosine 54. Positions 64, 69, and 101 each coordinate Mg(2+). Tyrosine 140 contributes to the substrate binding site.

This sequence belongs to the PPase family. Homohexamer. It depends on Mg(2+) as a cofactor.

The protein resides in the cytoplasm. It carries out the reaction diphosphate + H2O = 2 phosphate + H(+). Functionally, catalyzes the hydrolysis of inorganic pyrophosphate (PPi) forming two phosphate ions. This is Inorganic pyrophosphatase from Helicobacter pylori (strain ATCC 700392 / 26695) (Campylobacter pylori).